Reading from the N-terminus, the 271-residue chain is Formamidopyrimidine-DNA glycosylase (271 aa).

Pro-2 (schiff-base intermediate with DNA) is an active-site residue. Glu-3 (proton donor) is an active-site residue. Catalysis depends on Lys-57, which acts as the Proton donor; for beta-elimination activity. Positions 90, 109, and 151 each coordinate DNA. The FPG-type zinc-finger motif lies at 236–270 (HVYGRGGDTCTHCGQLLSEIRLGQRATVFCSICQQ). Arg-260 (proton donor; for delta-elimination activity) is an active-site residue.

It belongs to the FPG family. Monomer. It depends on Zn(2+) as a cofactor.

It carries out the reaction Hydrolysis of DNA containing ring-opened 7-methylguanine residues, releasing 2,6-diamino-4-hydroxy-5-(N-methyl)formamidopyrimidine.. The enzyme catalyses 2'-deoxyribonucleotide-(2'-deoxyribose 5'-phosphate)-2'-deoxyribonucleotide-DNA = a 3'-end 2'-deoxyribonucleotide-(2,3-dehydro-2,3-deoxyribose 5'-phosphate)-DNA + a 5'-end 5'-phospho-2'-deoxyribonucleoside-DNA + H(+). Functionally, involved in base excision repair of DNA damaged by oxidation or by mutagenic agents. Acts as a DNA glycosylase that recognizes and removes damaged bases. Has a preference for oxidized purines, such as 7,8-dihydro-8-oxoguanine (8-oxoG). Has AP (apurinic/apyrimidinic) lyase activity and introduces nicks in the DNA strand. Cleaves the DNA backbone by beta-delta elimination to generate a single-strand break at the site of the removed base with both 3'- and 5'-phosphates. The protein is Formamidopyrimidine-DNA glycosylase of Shewanella piezotolerans (strain WP3 / JCM 13877).